A 193-amino-acid polypeptide reads, in one-letter code: Interleukin-18 (193 aa).

The propeptide occupies 1-36 (MAAEQVEDYCISFVEMKFINNTLYFVAENDEDLESD).

This sequence belongs to the IL-1 family. As to quaternary structure, forms a ternary complex with ligand-binding receptor subunit IL18R1 and signaling receptor subunit IL18RAP at the plasma membrane. Mature IL18 first binds to IL18R1 forming a low affinity binary complex, which then interacts with IL18RAP to form a high affinity ternary complex that signals inside the cell. Interacts with cargo receptor TMED10; the interaction mediates the translocation from the cytoplasm into the ERGIC (endoplasmic reticulum-Golgi intermediate compartment) and thereby secretion. In terms of processing, the pro-IL-18 precursor is processed by CASP1, CASP4 or CASP5 to yield its mature, active form. The pro-IL-18 precursor features autoinhibitory interactions between the propeptide and the post-cleavage-site region, preventing recognition by the IL18R1 receptor. Processing by CASP1, CASP4 or CASP5 induces conformational changes to generate critical receptor-binding sites. The mature form is then secreted and released in the extracellular milieu by passing through the gasdermin-D (GSDMD) pore. In contrast, cleavage by CASP3 inactivates IL18.

It localises to the cytoplasm. Its subcellular location is the cytosol. The protein resides in the secreted. Functionally, pro-inflammatory cytokine primarily involved in epithelial barrier repair, polarized T-helper 1 (Th1) cell and natural killer (NK) cell immune responses. Upon binding to IL18R1 and IL18RAP, forms a signaling ternary complex which activates NF-kappa-B, triggering synthesis of inflammatory mediators. Synergizes with IL12/interleukin-12 to induce IFNG synthesis from T-helper 1 (Th1) cells and natural killer (NK) cells. Involved in transduction of inflammation downstream of pyroptosis: its mature form is specifically released in the extracellular milieu by passing through the gasdermin-D (GSDMD) pore. This is Interleukin-18 (IL18) from Bos taurus (Bovine).